A 358-amino-acid chain; its full sequence is U5 small nuclear ribonucleoprotein 40 kDa protein (358 aa).

Lys-18 participates in a covalent cross-link: Glycyl lysine isopeptide (Lys-Gly) (interchain with G-Cter in SUMO2). Arg-21 carries the asymmetric dimethylarginine modification. WD repeat units follow at residues Gly-65–Ala-104, Gly-108–Arg-147, Gly-150–Thr-190, Gln-192–Thr-231, Gly-234–Arg-273, Asn-284–Lys-323, and Gly-326–Gln-358. Lys-271 participates in a covalent cross-link: Glycyl lysine isopeptide (Lys-Gly) (interchain with G-Cter in SUMO2).

As to quaternary structure, component of the pre-catalytic and catalytic spliceosome complexes. Component of the postcatalytic spliceosome P complex. Part of the U5 snRNP complex. Interacts with PRPF8. Component of the U4/U6-U5 tri-snRNP complex composed of the U4, U6 and U5 snRNAs and at least PRPF3, PRPF4, PRPF6, PRPF8, PRPF31, SNRNP200, TXNL4A, WDR57, SNRNP40, DDX23, CD2BP2, PPIH, SNU13, EFTUD2, SART1 and USP39. Component of the minor spliceosome, which splices U12-type introns.

Its subcellular location is the nucleus. Functionally, required for pre-mRNA splicing as component of the activated spliceosome. Component of the U5 small nuclear ribonucleoprotein (snRNP) complex and the U4/U6-U5 tri-snRNP complex, building blocks of the spliceosome. As a component of the minor spliceosome, involved in the splicing of U12-type introns in pre-mRNAs. This Mus musculus (Mouse) protein is U5 small nuclear ribonucleoprotein 40 kDa protein (Snrnp40).